A 521-amino-acid polypeptide reads, in one-letter code: Bifunctional purine biosynthesis protein PurH (521 aa).

The region spanning Met1–Val145 is the MGS-like domain.

This sequence belongs to the PurH family.

The catalysed reaction is (6R)-10-formyltetrahydrofolate + 5-amino-1-(5-phospho-beta-D-ribosyl)imidazole-4-carboxamide = 5-formamido-1-(5-phospho-D-ribosyl)imidazole-4-carboxamide + (6S)-5,6,7,8-tetrahydrofolate. It carries out the reaction IMP + H2O = 5-formamido-1-(5-phospho-D-ribosyl)imidazole-4-carboxamide. It functions in the pathway purine metabolism; IMP biosynthesis via de novo pathway; 5-formamido-1-(5-phospho-D-ribosyl)imidazole-4-carboxamide from 5-amino-1-(5-phospho-D-ribosyl)imidazole-4-carboxamide (10-formyl THF route): step 1/1. Its pathway is purine metabolism; IMP biosynthesis via de novo pathway; IMP from 5-formamido-1-(5-phospho-D-ribosyl)imidazole-4-carboxamide: step 1/1. The polypeptide is Bifunctional purine biosynthesis protein PurH (Burkholderia cenocepacia (strain HI2424)).